A 235-amino-acid chain; its full sequence is Ribitol-5-phosphate cytidylyltransferase (235 aa).

Residues 7–10 (LAGG), 82–88 (GADRNTS), and S113 contribute to the CTP site.

It belongs to the IspD/TarI cytidylyltransferase family. TarI subfamily.

The enzyme catalyses D-ribitol 5-phosphate + CTP + H(+) = CDP-L-ribitol + diphosphate. It functions in the pathway cell wall biogenesis; poly(ribitol phosphate) teichoic acid biosynthesis. Catalyzes the transfer of the cytidylyl group of CTP to D-ribitol 5-phosphate. This is Ribitol-5-phosphate cytidylyltransferase from Streptococcus pneumoniae serotype 2 (strain D39 / NCTC 7466).